The chain runs to 545 residues: T-complex protein 1 subunit gamma (545 aa).

M1 is modified (N-acetylmethionine). The segment at 1–24 is disordered; that stretch reads MMGHRPVLVLSQNTKRESGRKVQS. S11 carries the phosphoserine modification. Residue K15 forms a Glycyl lysine isopeptide (Lys-Gly) (interchain with G-Cter in SUMO2) linkage. G42 contacts ADP. G42 provides a ligand contact to ATP. D93 serves as a coordination point for Mg(2+). ADP-binding residues include G94, T95, T96, S97, T162, and K163. The ATP site is built by G94, T95, and T96. At S170 the chain carries Phosphoserine. K222 is subject to N6-acetyllysine. Residues S243 and S244 each carry the phosphoserine modification. Position 247 is a phosphotyrosine (Y247). Residues K248 and K249 each participate in a glycyl lysine isopeptide (Lys-Gly) (interchain with G-Cter in SUMO2) cross-link. Position 252 is a phosphoserine (S252). A disulfide bridge connects residues C366 and C372. A Glycyl lysine isopeptide (Lys-Gly) (interchain with G-Cter in SUMO2) cross-link involves residue K381. ADP is bound at residue G411. Residue G411 participates in ATP binding. Phosphothreonine occurs at positions 430 and 459. The ADP site is built by G482, E483, E497, and K502. G482 is an ATP binding site. E497 lines the ATP pocket. Positions 526 to 545 are disordered; the sequence is HKKKGDDQNRQTGAPDAGQE.

This sequence belongs to the TCP-1 chaperonin family. In terms of assembly, component of the chaperonin-containing T-complex (TRiC), a hexadecamer composed of two identical back-to-back stacked rings enclosing a protein folding chamber. Each ring is made up of eight different subunits: TCP1/CCT1, CCT2, CCT3, CCT4, CCT5, CCT6A/CCT6, CCT7, CCT8. Interacts with PACRG. Interacts with DNAAF4. Interacts with DLEC1.

The protein resides in the cytoplasm. It carries out the reaction ATP + H2O = ADP + phosphate + H(+). In terms of biological role, component of the chaperonin-containing T-complex (TRiC), a molecular chaperone complex that assists the folding of actin, tubulin and other proteins upon ATP hydrolysis. The TRiC complex mediates the folding of WRAP53/TCAB1, thereby regulating telomere maintenance. As part of the TRiC complex may play a role in the assembly of BBSome, a complex involved in ciliogenesis regulating transports vesicles to the cilia. The polypeptide is T-complex protein 1 subunit gamma (Cct3) (Rattus norvegicus (Rat)).